Reading from the N-terminus, the 724-residue chain is Phenylalanine ammonia-lyase (724 aa).

The Proton donor/acceptor role is filled by Y99. Residues 204-206 (ASG) constitute a cross-link (5-imidazolinone (Ala-Gly)). S205 is modified (2,3-didehydroalanine (Ser)). 7 residues coordinate (E)-cinnamate: N265, Q355, R361, N391, K462, E490, and N493.

The protein belongs to the PAL/histidase family. As to quaternary structure, homotetramer. Post-translationally, contains an active site 4-methylidene-imidazol-5-one (MIO), which is formed autocatalytically by cyclization and dehydration of residues Ala-Ser-Gly.

It is found in the cytoplasm. The catalysed reaction is L-phenylalanine = (E)-cinnamate + NH4(+). The protein operates within phenylpropanoid metabolism; trans-cinnamate biosynthesis; trans-cinnamate from L-phenylalanine: step 1/1. Functionally, catalyzes the non-oxidative deamination of L-phenylalanine to form trans-cinnamic acid and a free ammonium ion. Facilitates the commitment step in phenylpropanoid pathways that produce secondary metabolites such as lignins, coumarins and flavonoids. This Flammulina velutipes (Agaricus velutipes) protein is Phenylalanine ammonia-lyase.